The following is a 415-amino-acid chain: Cell wall mannoprotein PIR3 (415 aa).

A signal peptide spans M1–A18. The propeptide occupies A19 to R67. PIR1/2/3 repeat units follow at residues K66–A84, A92–T109, A110–T127, A128–T145, A146–T163, A164–T181, A182–T199, A200–T217, A218–T235, A236–T253, A254–T271, K272–T288, and T289–K307.

It belongs to the PIR protein family. In terms of processing, covalently linked to beta-1,3-glucan of the inner cell wall layer via an alkali-sensitive ester linkage between the gamma-carboxyl group of glutamic acids, arising from specific glutamines within the PIR1/2/3 repeats, and hydroxyl groups of glucoses of beta-1,3-glucan chains. O-glycosylated. Extensively O-mannosylated.

The protein localises to the secreted. It is found in the cell wall. Component of the outer cell wall layer. Required for stability of the cell wall and for optimal growth. Required for resistance against several antifungal and cell wall-perturbing agents. This Saccharomyces cerevisiae (strain YJM789) (Baker's yeast) protein is Cell wall mannoprotein PIR3 (PIR3).